A 133-amino-acid polypeptide reads, in one-letter code: Putative pre-16S rRNA nuclease (133 aa).

The protein belongs to the YqgF nuclease family.

The protein resides in the cytoplasm. In terms of biological role, could be a nuclease involved in processing of the 5'-end of pre-16S rRNA. The protein is Putative pre-16S rRNA nuclease of Bordetella bronchiseptica (strain ATCC BAA-588 / NCTC 13252 / RB50) (Alcaligenes bronchisepticus).